The primary structure comprises 92 residues: Small ribosomal subunit protein uS19 (92 aa).

Belongs to the universal ribosomal protein uS19 family.

Functionally, protein S19 forms a complex with S13 that binds strongly to the 16S ribosomal RNA. The sequence is that of Small ribosomal subunit protein uS19 from Wigglesworthia glossinidia brevipalpis.